We begin with the raw amino-acid sequence, 572 residues long: Adenine deaminase (572 aa).

The protein belongs to the metallo-dependent hydrolases superfamily. Adenine deaminase family. Mn(2+) serves as cofactor.

The catalysed reaction is adenine + H2O + H(+) = hypoxanthine + NH4(+). This is Adenine deaminase from Clostridium perfringens (strain 13 / Type A).